The primary structure comprises 260 residues: CD40 ligand (260 aa).

Over methionine 1–lysine 22 the chain is Cytoplasmic. Residues isoleucine 23 to leucine 46 form a helical; Signal-anchor for type II membrane protein membrane-spanning segment. Residues histidine 47–leucine 260 are Extracellular-facing. Residues valine 121 to leucine 260 form the THD domain. Residues cysteine 177 and cysteine 217 are joined by a disulfide bond. N-linked (GlcNAc...) asparagine glycosylation occurs at asparagine 239.

Belongs to the tumor necrosis factor family. As to quaternary structure, homotrimer. Interacts with CD28. CD40 ligand, soluble form: Exists as either a monomer or a homotrimer. Forms a ternary complex between CD40 and integrins for CD40-CD40LG signaling. Post-translationally, the soluble form derives from the membrane form by proteolytic processing.

The protein resides in the cell membrane. It localises to the cell surface. It is found in the secreted. Its function is as follows. Cytokine that acts as a ligand to CD40/TNFRSF5. Costimulates T-cell proliferation and cytokine production. Its cross-linking on T-cells generates a costimulatory signal which enhances the production of IL4 and IL10 in conjunction with the TCR/CD3 ligation and CD28 costimulation. Induces the activation of NF-kappa-B. Induces the activation of kinases MAPK8 and PAK2 in T-cells. Mediates B-cell proliferation in the absence of co-stimulus as well as IgE production in the presence of IL4. Involved in immunoglobulin class switching. Functionally, acts as a ligand for integrins, specifically ITGA5:ITGB1 and ITGAV:ITGB3; both integrins and the CD40 receptor are required for activation of CD40-CD40LG signaling, which have cell-type dependent effects, such as B-cell activation, NF-kappa-B signaling and anti-apoptotic signaling. In Felis catus (Cat), this protein is CD40 ligand (CD40LG).